A 910-amino-acid polypeptide reads, in one-letter code: Protein translocase subunit SecA (910 aa).

Residues Gln-86, 104-108 (GEGKT), and Asp-499 each bind ATP. The Zn(2+) site is built by Cys-894, Cys-896, Cys-905, and His-906.

It belongs to the SecA family. Monomer and homodimer. Part of the essential Sec protein translocation apparatus which comprises SecA, SecYEG and auxiliary proteins SecDF-YajC and YidC. Zn(2+) is required as a cofactor.

It localises to the cell inner membrane. It is found in the cytoplasm. It catalyses the reaction ATP + H2O + cellular proteinSide 1 = ADP + phosphate + cellular proteinSide 2.. In terms of biological role, part of the Sec protein translocase complex. Interacts with the SecYEG preprotein conducting channel. Has a central role in coupling the hydrolysis of ATP to the transfer of proteins into and across the cell membrane, serving both as a receptor for the preprotein-SecB complex and as an ATP-driven molecular motor driving the stepwise translocation of polypeptide chains across the membrane. The chain is Protein translocase subunit SecA from Rickettsia bellii (strain OSU 85-389).